A 164-amino-acid polypeptide reads, in one-letter code: HTH-type transcriptional regulator IscR (164 aa).

The HTH rrf2-type domain occupies 2-131 (RLTSKGRYAV…NNITLDELVN (130 aa)). Positions 28-51 (LADISERQGISLSYLEQLFSRLRK) form a DNA-binding region, H-T-H motif. [2Fe-2S] cluster-binding residues include Cys-92, Cys-98, and Cys-104.

Requires [2Fe-2S] cluster as cofactor.

In terms of biological role, regulates the transcription of several operons and genes involved in the biogenesis of Fe-S clusters and Fe-S-containing proteins. The polypeptide is HTH-type transcriptional regulator IscR (Pectobacterium carotovorum subsp. carotovorum (strain PC1)).